The chain runs to 380 residues: Chaperone protein DnaJ (380 aa).

The 66-residue stretch at 6–71 (DYYESLEVSR…QKRAAYDRYG (66 aa)) folds into the J domain. The CR-type zinc-finger motif lies at 136-215 (GVTKDVEVRT…CHGTGTEAKT (80 aa)). Zn(2+)-binding residues include Cys-149, Cys-152, Cys-167, Cys-170, Cys-189, Cys-192, Cys-203, and Cys-206. 4 CXXCXGXG motif repeats span residues 149-156 (CEACHGSG), 167-174 (CPTCHGAG), 189-196 (CPTCHGSG), and 203-210 (CKVCHGTG).

This sequence belongs to the DnaJ family. In terms of assembly, homodimer. It depends on Zn(2+) as a cofactor.

Its subcellular location is the cytoplasm. Participates actively in the response to hyperosmotic and heat shock by preventing the aggregation of stress-denatured proteins and by disaggregating proteins, also in an autonomous, DnaK-independent fashion. Unfolded proteins bind initially to DnaJ; upon interaction with the DnaJ-bound protein, DnaK hydrolyzes its bound ATP, resulting in the formation of a stable complex. GrpE releases ADP from DnaK; ATP binding to DnaK triggers the release of the substrate protein, thus completing the reaction cycle. Several rounds of ATP-dependent interactions between DnaJ, DnaK and GrpE are required for fully efficient folding. Also involved, together with DnaK and GrpE, in the DNA replication of plasmids through activation of initiation proteins. The polypeptide is Chaperone protein DnaJ (Gluconobacter oxydans (strain 621H) (Gluconobacter suboxydans)).